The sequence spans 297 residues: Ribonuclease HIII (297 aa).

Positions 81 to 297 (IPIIGTDEVG…NTKKAQALLK (217 aa)) constitute an RNase H type-2 domain. A divalent metal cation-binding residues include Asp-87, Glu-88, and Asp-192.

This sequence belongs to the RNase HII family. RnhC subfamily. It depends on Mn(2+) as a cofactor. Mg(2+) is required as a cofactor.

It is found in the cytoplasm. The enzyme catalyses Endonucleolytic cleavage to 5'-phosphomonoester.. In terms of biological role, endonuclease that specifically degrades the RNA of RNA-DNA hybrids. This is Ribonuclease HIII from Streptococcus agalactiae serotype III (strain NEM316).